We begin with the raw amino-acid sequence, 538 residues long: Cytochrome P450 734A4 (538 aa).

The helical transmembrane segment at 5 to 27 (VAVAAAVLLLLHVAARVADAVWW) threads the bilayer. Position 480 (C480) interacts with heme.

This sequence belongs to the cytochrome P450 family. The cofactor is heme. Expressed in roots, shoot apex, leaf sheaths, leaf blades, internodes and panicles.

The protein resides in the membrane. In terms of biological role, cytochrome P450 involved in brassinosteroids (BRs) inactivation and regulation of BRs homeostasis. Is a multifunctional and multisubstrate enzyme that controls the endogenous bioactive BR content both by direct inactivation of castasterone (CS) and by decreasing the levels of BR precursors. Catalyzes the oxidation of carbon 22 hydroxylated BR intermediates to produce C26 oxidized metabolites. The chain is Cytochrome P450 734A4 (CYP734A4) from Oryza sativa subsp. japonica (Rice).